Consider the following 285-residue polypeptide: Acetyl-coenzyme A carboxylase carboxyl transferase subunit beta (285 aa).

Positions 29–285 constitute a CoA carboxyltransferase N-terminal domain; sequence IMTKCPKCKK…ILKIHQEVSN (257 aa). Positions 33, 36, 52, and 55 each coordinate Zn(2+). A C4-type zinc finger spans residues 33–55; that stretch reads CPKCKKIMYTKELNENLNVCFNC.

Belongs to the AccD/PCCB family. Acetyl-CoA carboxylase is a heterohexamer composed of biotin carboxyl carrier protein (AccB), biotin carboxylase (AccC) and two subunits each of ACCase subunit alpha (AccA) and ACCase subunit beta (AccD). Zn(2+) is required as a cofactor.

The protein resides in the cytoplasm. It catalyses the reaction N(6)-carboxybiotinyl-L-lysyl-[protein] + acetyl-CoA = N(6)-biotinyl-L-lysyl-[protein] + malonyl-CoA. It functions in the pathway lipid metabolism; malonyl-CoA biosynthesis; malonyl-CoA from acetyl-CoA: step 1/1. Functionally, component of the acetyl coenzyme A carboxylase (ACC) complex. Biotin carboxylase (BC) catalyzes the carboxylation of biotin on its carrier protein (BCCP) and then the CO(2) group is transferred by the transcarboxylase to acetyl-CoA to form malonyl-CoA. The sequence is that of Acetyl-coenzyme A carboxylase carboxyl transferase subunit beta from Staphylococcus epidermidis (strain ATCC 12228 / FDA PCI 1200).